Consider the following 675-residue polypeptide: MGKIKKKGTSGQAKNYITRTQAVRKLQISLPDFRRLCIFKGIYPREPRNKKKASKTSTPNTTFYYTKDIQYLLHEPLLRKFREQKAVAKKIARSLGRGEVGDAARLEKNHAPKLTLDHVIKERYPTFIDALRDLDDALSLLFLFANLPSTAHVPPKTIALCQRLCHEFQHYLITTNSLRKSFLSIKGIYYQATIQGQDILWLVPYRFVQRVNGDVDYRIMATFVDFYTTLLGFVNFRLYSSIGLRYPPKFDTRSDENGAELAAFTLEGRGVGDAPKAIEAGNTQATTSTNNKEVSKEIQAKVDNVIKSAGLDEAKEEPAAETTEESSETIDKFEPAAPEADTLPQPDLSGNEAGSLFAPFTFYISREAPRAPLEFILRAFGCKRIGWDAVLGDGAFTHDETDTRITHQIVDRPQLPESSLPAIPAASKDGSDAVQKVKPGTRIPGRTYVQPQWVWDCINEGRLVRPDLYAPGATLPPHLSPWVKPSRGGYDPKASLAEQEEEGEAELDEDSDEEMEEATSDKKAEAKADVGSESEDEDESVDGGMDVAGTDDDESESEDEEEDFDGFEEEAASESEDEEEAARTQHQKELEAEAAGLPFSSNGATSDGSKKKASQAKKIAAKKRKEEEELERQKMMMSRKKRKLLEKMIYSNKKQSEEAAKLRSKRRKLEKGAAK.

Positions Ala309–Asp331 are disordered. A BRCT domain is found at Glu352–Pro471. The interval Leu475–Lys675 is disordered. Over residues Glu498–Ala518 the composition is skewed to acidic residues. The span at Thr519–Val530 shows a compositional bias: basic and acidic residues. Composition is skewed to acidic residues over residues Ser532–Val541 and Gly549–Glu580. The stretch at Asp551–Lys675 forms a coiled coil. Residues Ala581–Glu591 show a composition bias toward basic and acidic residues. A compositionally biased stretch (basic residues) spans Lys611–Lys623. Over residues Arg624–Lys634 the composition is skewed to basic and acidic residues.

Belongs to the pescadillo family. In terms of assembly, component of the NOP7 complex, composed of erb1, nop7 and ytm1. The complex is held together by erb1, which interacts with nop7 via its N-terminal domain and with ytm1 via a high-affinity interaction between the seven-bladed beta-propeller domains of the 2 proteins. The NOP7 complex associates with the 66S pre-ribosome.

The protein resides in the nucleus. Its subcellular location is the nucleolus. It localises to the nucleoplasm. In terms of biological role, component of the NOP7 complex, which is required for maturation of the 25S and 5.8S ribosomal RNAs and formation of the 60S ribosome. In Aspergillus fumigatus (strain CBS 144.89 / FGSC A1163 / CEA10) (Neosartorya fumigata), this protein is Pescadillo homolog (nop7).